Reading from the N-terminus, the 220-residue chain is Redox-sensing transcriptional repressor Rex (220 aa).

The segment at residues 17–56 is a DNA-binding region (H-T-H motif); that stretch reads LYARSLRYLLQEGVESVSSQELGDRINVTAAQIRKDLSYF. 91–96 is a binding site for NAD(+); it reads GIGHLG.

This sequence belongs to the transcriptional regulatory Rex family. As to quaternary structure, homodimer.

The protein localises to the cytoplasm. Functionally, modulates transcription in response to changes in cellular NADH/NAD(+) redox state. The protein is Redox-sensing transcriptional repressor Rex of Roseiflexus sp. (strain RS-1).